The primary structure comprises 559 residues: Leucine-rich repeat protein soc-2 (559 aa).

The segment covering 1–17 has biased composition (basic and acidic residues); sequence METSKEFEFRPAKETSR. The interval 1-55 is disordered; the sequence is METSKEFEFRPAKETSRSKSPGGIVGRLSNFARNKARHSLSEKGSNSVGGSGGAG. 20 LRR repeats span residues 74–95, 97–118, 120–142, 143–164, 166–187, 189–210, 212–233, 235–256, 258–279, 281–302, 305–326, 329–350, 353–374, 376–397, 399–420, 422–443, 445–466, 468–489, 491–513, and 515–536; these read QDQR…IKEL, QLTE…IGQL, NLKK…ASLE, SLET…IYKI, SLET…IGNL, KLKM…IGKL, SLVV…IGDC, SLTQ…IGKL, NLVR…LESC, QLEE…LLTM, KIHT…GPQQ, STVT…IFSK, RLTK…MGSW, SITE…IEKL, NLEI…IGNL, KLRE…IGFL, HLTK…IGNL, SLQD…IGHL, SLKS…LALC, and SLEI…ITAG.

This sequence belongs to the SHOC2 family. Interacts with let-60.

In terms of biological role, acts as a Ras effector and participates in MAPK pathway activation. Probably acts as a scaffolding protein in a protein phosphatase complex that specifically dephosphorylates Raf kinase and stimulates Raf activity at specialized signaling complexes upon Ras activation. Required for vulval development. Involved in fluid homeostasis. Plays a role in nicotinic acetylcholine receptor (nAChR)-mediated sensitivity to nicotine. This Caenorhabditis elegans protein is Leucine-rich repeat protein soc-2 (soc-2).